The primary structure comprises 348 residues: Dihydroorotase (348 aa).

Zn(2+) contacts are provided by histidine 17 and histidine 19. Substrate is bound by residues 19–21 (HLR) and asparagine 45. Positions 103, 140, and 178 each coordinate Zn(2+). Lysine 103 is subject to N6-carboxylysine. Histidine 140 is a substrate binding site. Leucine 223 contributes to the substrate binding site. A Zn(2+)-binding site is contributed by aspartate 251. Residue aspartate 251 is part of the active site. Positions 255 and 267 each coordinate substrate.

This sequence belongs to the metallo-dependent hydrolases superfamily. DHOase family. Class II DHOase subfamily. As to quaternary structure, homodimer. Zn(2+) serves as cofactor.

It carries out the reaction (S)-dihydroorotate + H2O = N-carbamoyl-L-aspartate + H(+). It participates in pyrimidine metabolism; UMP biosynthesis via de novo pathway; (S)-dihydroorotate from bicarbonate: step 3/3. Functionally, catalyzes the reversible cyclization of carbamoyl aspartate to dihydroorotate. In Salmonella agona (strain SL483), this protein is Dihydroorotase.